We begin with the raw amino-acid sequence, 287 residues long: mRNA-capping enzyme regulatory subunit OPG124 (287 aa).

The protein belongs to the orthopoxvirus mRNA-capping enzyme regulatory subunit family. In terms of assembly, interacts with the catalytic subunit OPG113.

The protein localises to the virion. Functionally, regulatory subunit of the mRNA cap enzyme which stabilizes the catalytic subunit and enhances its methyltransferase activity through an allosteric mechanism. Heterodimeric mRNA capping enzyme catalyzes the linkage of a N7-methyl-guanosine moiety to the first transcribed nucleotide (cap 0 structure), whereas the methyltransferase OPG102 is responsible for a second methylation at the 2'-O position of the ribose (cap 1 structure). Also involved in early viral gene transcription termination and intermediate viral gene transcription initiation. Early gene transcription termination requires the termination factor VTF, the DNA-dependent ATPase NPH-I/OPG123 and the RAP94/OPG109 subunit of the viral RNA polymerase, as well as the presence of a specific termination motif. Binds, together with RAP94/OPG109, to the termination motif 5'-UUUUUNU-3' in the nascent early mRNA. This Bos taurus (Bovine) protein is mRNA-capping enzyme regulatory subunit OPG124 (OPG124).